Consider the following 1097-residue polypeptide: Protein STICHEL-like 3 (1097 aa).

Disordered stretches follow at residues 1–22, 74–168, 220–293, 321–358, and 400–436; these read MTTT…NNRI, SLRD…YRIG, NVRP…GFGE, GRSL…DSSS, and DSDL…LTEK. Positions 10–20 are enriched in polar residues; the sequence is RVASSSSTRNN. Residues 95 to 113 show a composition bias toward basic and acidic residues; sequence LPKKGDLVEGGRRSVDLKK. A compositionally biased stretch (polar residues) spans 126–136; sequence PVVNFGTSKVT. A compositionally biased stretch (basic and acidic residues) spans 137 to 168; sequence PSDERSGPVSGERDSGRRVKREESSRKSYRIG. The span at 227–241 shows a compositional bias: gly residues; the sequence is YGGGGGGGNTRGCAG. A compositionally biased stretch (basic residues) spans 245–259; it reads RPKRRKFRGTRRVRG. 2 stretches are compositionally biased toward basic and acidic residues: residues 281-291 and 332-345; these read VEKHDGEKEGF and KGGR…RNGS. A compositionally biased stretch (low complexity) spans 346-358; that stretch reads DKMMIQSDDDSSS. A compositionally biased stretch (basic residues) spans 411–429; that stretch reads EKKHKKKSHVNARHRHRQQ. 472–479 is an ATP binding site; it reads GPNGTGKT. Zn(2+) is bound by residues Cys-491, Cys-500, Cys-503, and Cys-506. Residues 742-770 are a coiled coil; that stretch reads KEDMEKLRQALKTLSEAEKQLRVSNDKLT. Disordered regions lie at residues 790-828, 913-932, and 956-1003; these read SSTA…DSRK, DPRN…DKSL, and VTES…SQSI. Composition is skewed to basic and acidic residues over residues 796 to 807 and 818 to 828; these read GGRESSDHHLDP and GLDRRRGDSRK. Residues 993–1003 show a composition bias toward polar residues; the sequence is ASQSQNQSQSI.

This sequence belongs to the DnaX/STICHEL family.

The sequence is that of Protein STICHEL-like 3 from Arabidopsis thaliana (Mouse-ear cress).